We begin with the raw amino-acid sequence, 467 residues long: Trigger factor (467 aa).

The region spanning 162–243 (GDFVSIDLSA…LNSVKERHLP (82 aa)) is the PPIase FKBP-type domain. Residues 426–435 (EEGNELDLDE) show a composition bias toward acidic residues. The tract at residues 426 to 467 (EEGNELDLDELFGTQAGEEQGEQAEGTEATDEQSAKADAKAE) is disordered. The span at 436–452 (LFGTQAGEEQGEQAEGT) shows a compositional bias: low complexity. Residues 458–467 (QSAKADAKAE) are compositionally biased toward basic and acidic residues.

The protein belongs to the FKBP-type PPIase family. Tig subfamily.

The protein localises to the cytoplasm. The enzyme catalyses [protein]-peptidylproline (omega=180) = [protein]-peptidylproline (omega=0). Involved in protein export. Acts as a chaperone by maintaining the newly synthesized protein in an open conformation. Functions as a peptidyl-prolyl cis-trans isomerase. This chain is Trigger factor, found in Saccharopolyspora erythraea (strain ATCC 11635 / DSM 40517 / JCM 4748 / NBRC 13426 / NCIMB 8594 / NRRL 2338).